A 3957-amino-acid chain; its full sequence is Ankyrin-2 (3957 aa).

Basic and acidic residues predominate over residues 1–14; it reads MMNEDAAQKSDSGE. The disordered stretch occupies residues 1–34; the sequence is MMNEDAAQKSDSGEKFNGSSQRRKRPKKSDSNAS. 24 ANK repeats span residues 30-62, 63-92, 96-125, 129-158, 162-191, 193-220, 232-261, 265-294, 298-327, 331-360, 364-393, 397-426, 430-459, 463-492, 496-525, 529-558, 562-591, 595-624, 628-657, 661-690, 694-723, 727-756, 760-789, and 793-822; these read DSNASFLRAARAGNLDKVVEYLKGGIDINTCNQ, NGLNALHLAAKEGHVGLVQELLGRGSSVDS, KGNTALHIASLAGQAEVVKVLVKEGANINA, NGFTPLYMAAQENHIDVVKYLLENGANQST, DGFTPLAVALQQGHNQAVAILLENDTKGKV, LPALHIAARKDDTKSAALLLQNDHNADV, SGFTPLHIAAHYGNVNVATLLLNRGAAVDF, NGITPLHVASKRGNTNMVKLLLDRGGQIDA, DGLTPLHCAARSGHDQVVELLLERGAPLLA, NGLSPLHMAAQGDHVECVKHLLQHKAPVDD, DYLTALHVAAHCGHYRVTKLLLDKRANPNA, NGFTPLHIACKKNRIKVMELLVKYGASIQA, SGLTPIHVAAFMGHLNIVLLLLQNGASPDV, RGETALHMAARAGQVEVVRCLLRNGALVDA, EEQTPLHIASRLGKTEIVQLLLQHMAHPDA, NGYTPLHISAREGQVDVASVLLEAGAAHSL, KGFTPLHVAAKYGSLDVAKLLLQRRAAADS, NGLTPLHVAAHYDNQKVALLLLEKGASPHA, NGYTPLHIAAKKNQMQIASTLLNYGAETNI, QGVTPLHLASQEGHTDMVTLLLDKGANIHM, SGLTSLHLAAQEDKVNVADILTKHGADQDA, LGYTPLIVACHYGNVKMVNFLLKQGANVNA, NGYTPLHQAAQQGHTHIINVLLQHGAKPNA, and NGNTALAIAKRLGYISVVDTLKVVTEEVTT. Phosphoserine is present on residues Ser-31 and Ser-34. A Phosphotyrosine modification is found at Tyr-378. Tyr-531 is modified (phosphotyrosine). Ser-846 is modified (phosphoserine). Thr-853 bears the Phosphothreonine mark. Phosphoserine is present on Ser-874. The interaction with SPTBN1 stretch occupies residues 966 to 1125; sequence SGFLVSFMVD…ELNEILNGMD (160 aa). ZU5 domains lie at 968-1156 and 1158-1304; these read FLVS…VVSR and KQDS…LIDC. The interval 1289–1423 is UPA domain; that stretch reads VSFTTNVSAR…FVKVRDTTQE (135 aa). Position 1382 is a phosphotyrosine (Tyr-1382). One can recognise a Death 1 domain in the interval 1450–1535; that stretch reads ITLPIYTKES…SDKAGSIKVK (86 aa). A disordered region spans residues 1457-1486; that stretch reads KESESDQEQEEEIDMTSEKNDETESTETSV. A phosphoserine mark is found at Ser-1459, Ser-1461, Ser-1473, Ser-1500, and Ser-1596. Residues 1461–1471 are compositionally biased toward acidic residues; it reads SDQEQEEEIDM. Disordered stretches follow at residues 1670-2137, 2197-2411, 2430-2484, 2507-2586, 2604-2852, 2864-2904, and 2923-2951; these read AVGR…TDFS, ALDG…GLEL, AVSH…GIFP, SRLL…TPEE, EAKQ…SLPH, DISA…TDRF, and QITSPYENVPSQSFFSSEESKTQTDANHT. Composition is skewed to basic and acidic residues over residues 1674-1683 and 1711-1733; these read SSEKEGKDIP and KQKQKEEGLQASAEKAELKKGSS. A phosphoserine mark is found at Ser-1732, Ser-1733, and Ser-1736. Over residues 1766-1783 the composition is skewed to basic and acidic residues; the sequence is IKDKVKALQKRVEDEQKG. 7 Repeat A repeats span residues 1806-1817, 1818-1829, 1830-1841, 1842-1853, 1854-1865, 1866-1877, and 1878-1889; these read HPAASPSLKSER, HAPGSPSPKTER, HSTLSSSAKTER, HPPVSPSSKTEK, HSPVSPSAKTER, HSPASSSSKTEK, and HSPVSPSTKTER. The tract at residues 1806-1983 is repeat-rich region; the sequence is HPAASPSLKS…PVSPTSKTER (178 aa). Residues Ser-1855 and Ser-1858 each carry the phosphoserine modification. Composition is skewed to basic and acidic residues over residues 1886–1902 and 1921–1937; these read KTERHSPVSSTKTERHP and RTEKHPPVSPGRTEKRL. One copy of the Repeat A; approximate repeat lies at 1890 to 1900; the sequence is HSPVSSTKTER. 2 Repeat A repeats span residues 1901–1912 and 1913–1924; these read HPPVSPSGKTDK and RPPVSPSGRTEK. Residues 1925-1935 form a Repeat A; approximate repeat; sequence HPPVSPGRTEK. Ser-1929 carries the post-translational modification Phosphoserine. Repeat A repeat units lie at residues 1936–1947, 1948–1959, 1960–1971, and 1972–1983; these read RLPVSPSGRTDK, HQPVSTAGKTEK, HLPVSPSGKTEK, and QPPVSPTSKTER. Basic and acidic residues-rich tracts occupy residues 1980–1994, 2003–2034, 2075–2093, and 2102–2117; these read KTERIEETMSVRELM, PSKHKTGLFEHKSAKQKQPQEKGKVRVEKEKG, VKKEDAAGGKEKVLSHKIP, and EESHRESEVPKEKMAD. Position 2127 is a phosphoserine (Ser-2127). Residues 2128-2137 are compositionally biased toward basic and acidic residues; that stretch reads PDRKTSTDFS. At Thr-2239 the chain carries Phosphothreonine. A compositionally biased stretch (polar residues) spans 2240 to 2251; sequence PETSPESLSFSP. Residue Ser-2243 is modified to Phosphoserine. Positions 2252 to 2282 are enriched in basic and acidic residues; the sequence is KKSEEQTGETKESTKTETTTEIRSEKEHPTT. Thr-2269 carries the phosphothreonine modification. The residue at position 2275 (Ser-2275) is a Phosphoserine. Positions 2355 to 2376 are enriched in polar residues; the sequence is TFGSSAHKTQTDSEVQESTATS. Residues Ser-2405, Ser-2440, Ser-2454, Ser-2516, and Ser-2521 each carry the phosphoserine modification. The span at 2523–2545 shows a compositional bias: polar residues; it reads EQTSLMESSGKSPLSPDTPSSEE. Composition is skewed to basic and acidic residues over residues 2576 to 2586 and 2604 to 2619; these read NGEKKRFTPEE and EAKQKRDYKKEPKQEE. Phosphothreonine is present on Thr-2583. Phosphoserine is present on residues Ser-2679 and Ser-2701. Residues 2696–2705 are compositionally biased toward low complexity; it reads PSSMDSNSSP. Over residues 2729–2776 the composition is skewed to basic and acidic residues; sequence EPGKSEEEKDSESHLAEDRHAVSTEAEDRSYDKLNRDTDQPKICDGHG. 2 positions are modified to phosphoserine: Ser-2781 and Ser-2795. A compositionally biased stretch (low complexity) spans 2781-2791; that stretch reads SPSSSAAPVSS. Positions 2892 to 2903 are enriched in polar residues; that stretch reads SQDSSITTQTDR. A Phosphoserine modification is found at Ser-2956. 3 disordered regions span residues 2987–3016, 3069–3099, and 3136–3462; these read NFEGQDIKMESQQESTLWEMQSDSVSSSFE, LMVDRQSQGTTPDTTPARTPTEEGTPTSEQN, and QESR…PTKE. Polar residues predominate over residues 2998–3016; it reads QQESTLWEMQSDSVSSSFE. The residue at position 3075 (Ser-3075) is a Phosphoserine. At Thr-3078 the chain carries Phosphothreonine. A compositionally biased stretch (low complexity) spans 3078–3087; sequence TTPDTTPART. Positions 3090–3099 are enriched in polar residues; sequence EEGTPTSEQN. Residues 3137–3149 are compositionally biased toward basic and acidic residues; sequence ESREETLSEDVKE. The segment covering 3157–3169 has biased composition (low complexity); sequence LPLETSAESLALS. Residues 3175–3194 show a composition bias toward acidic residues; that stretch reads VDDEADLLPDDVSEEVEEIP. 2 stretches are compositionally biased toward polar residues: residues 3198-3212 and 3256-3265; these read AQLNSQMGISASTET and LDFSTLTRSV. Residues Ser-3273, Ser-3276, and Ser-3277 each carry the phosphoserine modification. The span at 3335–3344 shows a compositional bias: basic and acidic residues; that stretch reads EENKADEAKP. The segment covering 3357 to 3374 has biased composition (polar residues); the sequence is VEQQLSDLDTSVQKTVAP. Ser-3390 and Ser-3409 each carry phosphoserine. Basic and acidic residues predominate over residues 3409-3423; the sequence is SYTETETESRERAEE. Residues 3446–3460 are compositionally biased toward low complexity; that stretch reads SRSTTSSCRGGTSPT. Ser-3474 carries the post-translational modification Phosphoserine. One can recognise a Death 2 domain in the interval 3569-3653; sequence IEERLAYIAD…DIVHLMETNT (85 aa). Ser-3735 carries the phosphoserine modification. Phosphothreonine occurs at positions 3776, 3797, 3803, and 3814. Positions 3777 to 3858 are disordered; the sequence is PGTETSETQK…VESADNQPET (82 aa). Ser-3823 is subject to Phosphoserine. The segment covering 3832–3841 has biased composition (basic and acidic residues); that stretch reads PSEHREESSP. The residue at position 3909 (Ser-3909) is a Phosphoserine.

In terms of assembly, interacts with RHBG and SPTBN1. Colocalizes with Na/K ATPase, Na/Ca exchanger and SPTBN1. Directly interacts with DMD; this interaction is necessary for DMD localization at the sarcolemma. Interacts with DCTN4; this interaction is required for DCTN4 retention at costameres. Identified in complexes that contain VIM, EZR, AHNAK, BFSP1, BFSP2, ANK2, PLEC, PRX and spectrin. Interacts (via death domain) with RABGAP1L (via Rab-GAP TBC domain). In terms of processing, phosphorylated at multiple sites by different protein kinases and each phosphorylation event regulates the protein's structure and function. Present in plasma membrane of neurons as well as glial cells throughout the brain. Expressed in fetal brain and in temporal cortex of adult brain. Also expressed in the inner segments of rod photoreceptors in retina.

Its subcellular location is the cytoplasm. The protein localises to the cytoskeleton. It localises to the membrane. It is found in the myofibril. The protein resides in the sarcomere. Its subcellular location is the m line. The protein localises to the apical cell membrane. It localises to the cell membrane. It is found in the postsynaptic cell membrane. The protein resides in the early endosome. Its subcellular location is the recycling endosome. The protein localises to the lysosome. It localises to the mitochondrion. It is found in the z line. The protein resides in the sarcolemma. Its subcellular location is the T-tubule. Functionally, plays an essential role in the localization and membrane stabilization of ion transporters and ion channels in several cell types, including cardiomyocytes, as well as in striated muscle cells. In skeletal muscle, required for proper localization of DMD and DCTN4 and for the formation and/or stability of a special subset of microtubules associated with costameres and neuromuscular junctions. In cardiomyocytes, required for coordinate assembly of Na/Ca exchanger, SLC8A1/NCX1, Na/K ATPases ATP1A1 and ATP1A2 and inositol 1,4,5-trisphosphate (InsP3) receptors at sarcoplasmic reticulum/sarcolemma sites. Required for expression and targeting of SPTBN1 in neonatal cardiomyocytes and for the regulation of neonatal cardiomyocyte contraction rate. In the inner segment of rod photoreceptors, required for the coordinated expression of the Na/K ATPase, Na/Ca exchanger and beta-2-spectrin (SPTBN1). Plays a role in endocytosis and intracellular protein transport. Associates with phosphatidylinositol 3-phosphate (PI3P)-positive organelles and binds dynactin to promote long-range motility of cells. Recruits RABGAP1L to (PI3P)-positive early endosomes, where RABGAP1L inactivates RAB22A, and promotes polarized trafficking to the leading edge of the migrating cells. Part of the ANK2/RABGAP1L complex which is required for the polarized recycling of fibronectin receptor ITGA5 ITGB1 to the plasma membrane that enables continuous directional cell migration. In Homo sapiens (Human), this protein is Ankyrin-2 (ANK2).